We begin with the raw amino-acid sequence, 435 residues long: Glutamate-1-semialdehyde 2,1-aminomutase (435 aa).

At K269 the chain carries N6-(pyridoxal phosphate)lysine.

This sequence belongs to the class-III pyridoxal-phosphate-dependent aminotransferase family. HemL subfamily. As to quaternary structure, homodimer. It depends on pyridoxal 5'-phosphate as a cofactor.

The protein resides in the cytoplasm. The catalysed reaction is (S)-4-amino-5-oxopentanoate = 5-aminolevulinate. It participates in porphyrin-containing compound metabolism; protoporphyrin-IX biosynthesis; 5-aminolevulinate from L-glutamyl-tRNA(Glu): step 2/2. The chain is Glutamate-1-semialdehyde 2,1-aminomutase from Gemmatimonas aurantiaca (strain DSM 14586 / JCM 11422 / NBRC 100505 / T-27).